We begin with the raw amino-acid sequence, 104 residues long: Small ribosomal subunit protein uS10 (104 aa).

The protein belongs to the universal ribosomal protein uS10 family. As to quaternary structure, part of the 30S ribosomal subunit.

Its function is as follows. Involved in the binding of tRNA to the ribosomes. This is Small ribosomal subunit protein uS10 from Nitrosococcus oceani (strain ATCC 19707 / BCRC 17464 / JCM 30415 / NCIMB 11848 / C-107).